We begin with the raw amino-acid sequence, 236 residues long: DNA repair protein RecO (236 aa).

Belongs to the RecO family.

In terms of biological role, involved in DNA repair and RecF pathway recombination. The chain is DNA repair protein RecO from Haemophilus influenzae (strain PittGG).